The chain runs to 202 residues: Glycerol-3-phosphate acyltransferase (202 aa).

6 helical membrane passes run 2–22 (INLLFAVIAYLIGSVSFAVVV), 51–71 (KAAIFTLIGDALKGLAAVLLA), 80–100 (VDETGIALVALAVFLGHLFPL), 116–136 (ILFAIDPILGAGTLATWLIIA), 137–157 (FFFRYSSLAALISAIFAPFFY), and 158–178 (VLMNGVDIMAGAILVISVLLI).

It belongs to the PlsY family. As to quaternary structure, probably interacts with PlsX.

It is found in the cell inner membrane. It carries out the reaction an acyl phosphate + sn-glycerol 3-phosphate = a 1-acyl-sn-glycero-3-phosphate + phosphate. It participates in lipid metabolism; phospholipid metabolism. Catalyzes the transfer of an acyl group from acyl-phosphate (acyl-PO(4)) to glycerol-3-phosphate (G3P) to form lysophosphatidic acid (LPA). This enzyme utilizes acyl-phosphate as fatty acyl donor, but not acyl-CoA or acyl-ACP. In Cupriavidus metallidurans (strain ATCC 43123 / DSM 2839 / NBRC 102507 / CH34) (Ralstonia metallidurans), this protein is Glycerol-3-phosphate acyltransferase.